A 296-amino-acid polypeptide reads, in one-letter code: 4-hydroxybenzoate octaprenyltransferase (296 aa).

The next 8 helical transmembrane spans lie at 22-42, 46-66, 99-121, 139-159, 163-183, 211-231, 238-258, and 270-290; these read PIGI…SALG, WIVV…GCVI, LFAG…LVIW, FFAI…PMAY, LGEV…WAVA, FDVA…GGIG, PAFY…YTWI, and FLHN…DFLV.

Belongs to the UbiA prenyltransferase family. The cofactor is Mg(2+).

It localises to the cell inner membrane. It catalyses the reaction all-trans-octaprenyl diphosphate + 4-hydroxybenzoate = 4-hydroxy-3-(all-trans-octaprenyl)benzoate + diphosphate. The protein operates within cofactor biosynthesis; ubiquinone biosynthesis. In terms of biological role, catalyzes the prenylation of para-hydroxybenzoate (PHB) with an all-trans polyprenyl group. Mediates the second step in the final reaction sequence of ubiquinone-8 (UQ-8) biosynthesis, which is the condensation of the polyisoprenoid side chain with PHB, generating the first membrane-bound Q intermediate 3-octaprenyl-4-hydroxybenzoate. The sequence is that of 4-hydroxybenzoate octaprenyltransferase from Dechloromonas aromatica (strain RCB).